The sequence spans 117 residues: Hemerythrin subunit alpha (117 aa).

7 residues coordinate Fe cation: histidine 24, histidine 53, glutamate 57, histidine 72, histidine 76, histidine 105, and aspartate 110.

It belongs to the hemerythrin family. In terms of assembly, octamer composed of two types of chains: alpha and beta.

Hemerythrin is a respiratory protein in blood cells of certain marine worms. The oxygen-binding site in each chain contains two iron atoms. This chain is Hemerythrin subunit alpha, found in Lingula anatina (Brachiopod).